Reading from the N-terminus, the 335-residue chain is GTPase Obg (335 aa).

The 159-residue stretch at methionine 1–methionine 159 folds into the Obg domain. An OBG-type G domain is found at alanine 160–lysine 332. Residues glycine 166 to serine 173, phenylalanine 191 to histidine 195, aspartate 212 to glycine 215, asparagine 282 to aspartate 285, and serine 313 to leucine 315 contribute to the GTP site. Mg(2+)-binding residues include serine 173 and threonine 193.

This sequence belongs to the TRAFAC class OBG-HflX-like GTPase superfamily. OBG GTPase family. Monomer. Mg(2+) serves as cofactor.

Its subcellular location is the cytoplasm. Its function is as follows. An essential GTPase which binds GTP, GDP and possibly (p)ppGpp with moderate affinity, with high nucleotide exchange rates and a fairly low GTP hydrolysis rate. Plays a role in control of the cell cycle, stress response, ribosome biogenesis and in those bacteria that undergo differentiation, in morphogenesis control. The chain is GTPase Obg from Ruthia magnifica subsp. Calyptogena magnifica.